A 197-amino-acid chain; its full sequence is Protein GrpE (197 aa).

The segment covering 1–12 (MTDSDGKTDKSG) has biased composition (basic and acidic residues). Positions 1–35 (MTDSDGKTDKSGEPAAEVEPVVSKPYVMPDDPEDD) are disordered.

It belongs to the GrpE family. As to quaternary structure, homodimer.

The protein resides in the cytoplasm. Functionally, participates actively in the response to hyperosmotic and heat shock by preventing the aggregation of stress-denatured proteins, in association with DnaK and GrpE. It is the nucleotide exchange factor for DnaK and may function as a thermosensor. Unfolded proteins bind initially to DnaJ; upon interaction with the DnaJ-bound protein, DnaK hydrolyzes its bound ATP, resulting in the formation of a stable complex. GrpE releases ADP from DnaK; ATP binding to DnaK triggers the release of the substrate protein, thus completing the reaction cycle. Several rounds of ATP-dependent interactions between DnaJ, DnaK and GrpE are required for fully efficient folding. The chain is Protein GrpE from Nitrobacter winogradskyi (strain ATCC 25391 / DSM 10237 / CIP 104748 / NCIMB 11846 / Nb-255).